The following is a 1314-amino-acid chain: SWI/SNF chromatin-remodeling complex subunit SWI1 (1314 aa).

Composition is skewed to low complexity over residues 1–65 (MDFF…NTNT), 88–112 (SNNNNSNSNNNDNNNSNTVASSTNF), and 213–235 (ISQNSSSSTPNTNSNSTPNANQQ). Disordered regions lie at residues 1–112 (MDFF…STNF), 213–250 (ISQNSSSSTPNTNSNSTPNANQQFLPFNNSASNNGNLT), 262–321 (NSMD…STSN), and 355–384 (QNQQQQNQQPQQQQQQQQNPKFLQSQRQQQ). The prion domain (PrD) stretch occupies residues 1–323 (MDFFNLNNNN…NTNNSTSNAN (323 aa)). Over residues 236 to 250 (FLPFNNSASNNGNLT) the composition is skewed to polar residues. The region spanning 406–493 (NKQYELFMKS…ILLPYERHMI (88 aa)) is the ARID domain. Residues 581–592 (NVNNNNIGQQQV) show a composition bias toward low complexity. Positions 581 to 617 (NVNNNNIGQQQVKKPRKQRVKKKTKKELELERKERED) are disordered. Positions 593-605 (KKPRKQRVKKKTK) are enriched in basic residues. Over residues 606-617 (KELELERKERED) the composition is skewed to basic and acidic residues. A C4-type zinc finger spans residues 1241–1258 (CVQLIKCLVEKSICFENC).

It belongs to the SWI1 family. Component of the SWI/SNF global transcription activator complex. The 1.14 MDa SWI/SNF complex is composed of 11 different subunits: one copy each of SWI1, SNF2/SWI2, SNF5, SNF12/SWP73, ARP7/SWP61, ARP9/SWP59; two copies each of SWI3, SNF6, SNF11, SWP82; and three copies of TAF14/SWP29.

It is found in the nucleus. Involved in transcriptional activation. Component of the SWI/SNF complex, an ATP-dependent chromatin remodeling complex, which is required for the positive and negative regulation of gene expression of a large number of genes. It changes chromatin structure by altering DNA-histone contacts within a nucleosome, leading eventually to a change in nucleosome position, thus facilitating or repressing binding of gene-specific transcription factors. This Saccharomyces cerevisiae (strain ATCC 204508 / S288c) (Baker's yeast) protein is SWI/SNF chromatin-remodeling complex subunit SWI1 (SWI1).